The following is a 482-amino-acid chain: Class E basic helix-loop-helix protein 41 (482 aa).

Residue K31 forms a Glycyl lysine isopeptide (Lys-Gly) (interchain with G-Cter in SUMO2) linkage. Residues T44–L99 form the bHLH domain. Residues L67 to L71 form a necessary for interaction with RXRA and repressor activity towards RXRA region. K121 is covalently cross-linked (Glycyl lysine isopeptide (Lys-Gly) (interchain with G-Cter in SUMO2)). The 36-residue stretch at F131–L166 folds into the Orange domain. Residue K210 forms a Glycyl lysine isopeptide (Lys-Gly) (interchain with G-Cter in SUMO2) linkage. 2 disordered regions span residues A228 to A298 and V438 to P482. The segment covering A246–K256 has biased composition (basic and acidic residues). K266 participates in a covalent cross-link: Glycyl lysine isopeptide (Lys-Gly) (interchain with G-Cter in SUMO2). Residues R285–A297 show a composition bias toward gly residues.

Homodimer. Heterodimer with BHLHE40/DEC1. Interacts with CIART and BMAL1. Interacts with RXRA. Interacts with NR0B2 and HNF1A. Highly expressed in skeletal muscle and brain, moderately expressed in pancreas and heart, weakly expressed in placenta, lung, liver and kidney.

It is found in the nucleus. Functionally, transcriptional repressor involved in the regulation of the circadian rhythm by negatively regulating the activity of the clock genes and clock-controlled genes. Acts as the negative limb of a novel autoregulatory feedback loop (DEC loop) which differs from the one formed by the PER and CRY transcriptional repressors (PER/CRY loop). Both these loops are interlocked as it represses the expression of PER1 and in turn is repressed by PER1/2 and CRY1/2. Represses the activity of the circadian transcriptional activator: CLOCK-BMAL1 heterodimer by competing for the binding to E-box elements (5'-CACGTG-3') found within the promoters of its target genes. Negatively regulates its own expression and the expression of DBP and BHLHE41/DEC2. Acts as a corepressor of RXR and the RXR-LXR heterodimers and represses the ligand-induced RXRA/B/G, NR1H3/LXRA, NR1H4 and VDR transactivation activity. Inhibits HNF1A-mediated transactivation of CYP1A2, CYP2E1 AND CYP3A11. This Homo sapiens (Human) protein is Class E basic helix-loop-helix protein 41.